The chain runs to 442 residues: Trigger factor (442 aa).

The 86-residue stretch at 162–247 folds into the PPIase FKBP-type domain; it reads GDQVTIDAIG…IKAVHTSEPT (86 aa).

Belongs to the FKBP-type PPIase family. Tig subfamily.

Its subcellular location is the cytoplasm. It catalyses the reaction [protein]-peptidylproline (omega=180) = [protein]-peptidylproline (omega=0). Involved in protein export. Acts as a chaperone by maintaining the newly synthesized protein in an open conformation. Functions as a peptidyl-prolyl cis-trans isomerase. The chain is Trigger factor from Rickettsia canadensis (strain McKiel).